The primary structure comprises 280 residues: uncharacterized protein (280 aa).

Residues N75, N98, N107, N143, N158, N170, N192, N207, N224, and N230 are each glycosylated (N-linked (GlcNAc...) asparagine; by host). Residues 235 to 255 (AFTYGSWGVAMLLFAAVMVLV) form a helical membrane-spanning segment.

It belongs to the RL11 family.

The protein resides in the host membrane. This is an uncharacterized protein from Human cytomegalovirus (strain Merlin) (HHV-5).